The following is a 74-amino-acid chain: Psi-conotoxin PrIIIE (74 aa).

An N-terminal signal peptide occupies residues 1–19 (MSKLGVLLTICLLLFPITA). The propeptide occupies 20–50 (LPVDGDQPADRPVERMQDNISSEQHPFFEKR). Disulfide bonds link cysteine 54–cysteine 66, cysteine 55–cysteine 71, and cysteine 61–cysteine 72. At cysteine 72 the chain carries Cysteine amide.

Belongs to the conotoxin M superfamily. In terms of tissue distribution, expressed by the venom duct.

It is found in the secreted. In terms of biological role, psi-conotoxins act on postsynaptic membranes, and act as non-competitive antagonist of nicotinic acetylcholine receptors (nAChR). Reversibly inhibits both adult- and fetal-types nAChR. The inhibition potency against the adult- (alpha-1/beta-1/epsilon/delta) is higher than against the fetal-type (alpha-1/beta-1/gamma/delta). Induces flaccid paralysis in goldfish, but does not induce any remarkable behavior in mice and does not block action potential in directly stimulated frog muscle preparations. This chain is Psi-conotoxin PrIIIE, found in Conus parius (Cone snail).